Reading from the N-terminus, the 309-residue chain is MVRVYAPASSANMSVGFDVLGAAVTPIDGSLLGDVVGVEAADSFSLQNLGRFASKLPSKPRENIVYQCWERFCQELGKQIPVAMTLEKNMPIGSGLGSSACSVVAALVAMNEYCGKPLNDTRLLAIMGELEGRISGSIHYDNVAPCFLGGMQLMIEENGIISQQVPGFDEWLWVLAYPGIKVSTAEARAILPAQYRRQDCIAHGRHLAGFIHACYSRQPLLAAKLMKDVIAEPYRERLLPGFSQARQAVAEIGAVASGISGSGPTLFALCDKPDTAQRVAEWLAKNYLQNQEGFVHICRLDTAGARVLE.

P91 to C101 contributes to the ATP binding site.

It belongs to the GHMP kinase family. Homoserine kinase subfamily.

It is found in the cytoplasm. The enzyme catalyses L-homoserine + ATP = O-phospho-L-homoserine + ADP + H(+). Its pathway is amino-acid biosynthesis; L-threonine biosynthesis; L-threonine from L-aspartate: step 4/5. Catalyzes the ATP-dependent phosphorylation of L-homoserine to L-homoserine phosphate. This is Homoserine kinase from Escherichia fergusonii (strain ATCC 35469 / DSM 13698 / CCUG 18766 / IAM 14443 / JCM 21226 / LMG 7866 / NBRC 102419 / NCTC 12128 / CDC 0568-73).